An 88-amino-acid chain; its full sequence is Class II hydrophobin 5 (88 aa).

The first 14 residues, 1–14, serve as a signal peptide directing secretion; it reads MQFLVLALASLAAA. 4 cysteine pairs are disulfide-bonded: cysteine 27-cysteine 73, cysteine 35-cysteine 64, cysteine 36-cysteine 48, and cysteine 74-cysteine 85.

This sequence belongs to the cerato-ulmin hydrophobin family. Homotetramer. Further self-assembles to form highly ordered films at water-air interfaces through intermolecular interactions. In terms of tissue distribution, only appears on young aerial hyphae. HCf-5 is the most abundant transcript in sporulating mycelium.

It is found in the secreted. It localises to the cell wall. Functionally, aerial growth, conidiation, and dispersal of filamentous fungi in the environment rely upon a capability of their secreting small amphipathic proteins called hydrophobins (HPBs) with low sequence identity. Class I can self-assemble into an outermost layer of rodlet bundles on aerial cell surfaces, conferring cellular hydrophobicity that supports fungal growth, development and dispersal; whereas Class II form highly ordered films at water-air interfaces through intermolecular interactions but contribute nothing to the rodlet structure. The polypeptide is Class II hydrophobin 5 (Passalora fulva (Tomato leaf mold)).